We begin with the raw amino-acid sequence, 375 residues long: Chlorophyll a/b light-harvesting protein PcbC (375 aa).

The next 6 helical transmembrane spans lie at 40–60 (LLGA…SITV), 102–122 (YFVI…GGLF), 151–171 (LSLI…AFVA), 225–245 (IIGG…WHIL), 262–282 (AILS…GFFV), and 300–320 (GAAA…VWHA). Residues 352-375 (ARTFIGRGKPQPEPPKKKGLFGRG) form a disordered region.

The protein belongs to the PsbB/PsbC family. IsiA/Pcb subfamily. The antenna complex consists of chlorophylls (a and b) and chlorophyll a/b binding proteins. Requires chlorophyll a as cofactor. It depends on chlorophyll b as a cofactor.

It localises to the cellular thylakoid membrane. Functionally, the antenna complex functions as a light receptor, it captures and delivers excitation energy to photosystems II and I. The Prochlorales pcb genes are not related to higher plant LHCs. The protein is Chlorophyll a/b light-harvesting protein PcbC (pcbC) of Prochlorothrix hollandica.